The chain runs to 120 residues: Large ribosomal subunit protein bL12 (120 aa).

The protein belongs to the bacterial ribosomal protein bL12 family. Homodimer. Part of the ribosomal stalk of the 50S ribosomal subunit. Forms a multimeric L10(L12)X complex, where L10 forms an elongated spine to which 2 to 4 L12 dimers bind in a sequential fashion. Binds GTP-bound translation factors.

Its function is as follows. Forms part of the ribosomal stalk which helps the ribosome interact with GTP-bound translation factors. Is thus essential for accurate translation. The polypeptide is Large ribosomal subunit protein bL12 (Shouchella clausii (strain KSM-K16) (Alkalihalobacillus clausii)).